A 332-amino-acid polypeptide reads, in one-letter code: Ribosomal RNA small subunit methyltransferase H (332 aa).

Residues 39–41 (GGY), aspartate 56, phenylalanine 83, aspartate 100, and glutamine 107 contribute to the S-adenosyl-L-methionine site.

Belongs to the methyltransferase superfamily. RsmH family.

The protein localises to the cytoplasm. The catalysed reaction is cytidine(1402) in 16S rRNA + S-adenosyl-L-methionine = N(4)-methylcytidine(1402) in 16S rRNA + S-adenosyl-L-homocysteine + H(+). Its function is as follows. Specifically methylates the N4 position of cytidine in position 1402 (C1402) of 16S rRNA. The chain is Ribosomal RNA small subunit methyltransferase H from Bartonella grahamii (strain as4aup).